Here is a 729-residue protein sequence, read N- to C-terminus: Anti-bacteriophage protein B (729 aa).

The 163-residue stretch at 109-271 folds into the Helicase ATP-binding domain; that stretch reads FDLLKSGQNV…KLGYPHTFVS (163 aa). Position 122-129 (122-129) interacts with ATP; the sequence is APTSMGKS. Residues 297-472 form the Helicase C-terminal domain; the sequence is ALGEIAHACV…GIDTPINLLA (176 aa).

This sequence belongs to the helicase family. As to quaternary structure, interacts with AbpB.

Part of an antiviral system composed of AbpA and AbpB; when both are expressed from a plasmid they confer resistance to phages T2, T4, T7 and lambda but not RB32 or RB69. Resistance is temperature dependent, it can be seen at 30 degrees Celsius but not at 37 or 42 degrees Celsius. The system impairs phage but not bacterial DNA synthesis (shown for T4, T7 and lambda). Partially suppressed by mutations in T4 gene 41, a replicative helicase. In terms of biological role, deletion or mutations in this gene were selected in directed evolution experiments for resistance to intense ionizing radiation (3000 Gy). The polypeptide is Anti-bacteriophage protein B (Escherichia coli (strain K12)).